A 230-amino-acid chain; its full sequence is Ribosomal RNA large subunit methyltransferase E (230 aa).

Residues glycine 82, tryptophan 84, aspartate 100, aspartate 116, and aspartate 140 each coordinate S-adenosyl-L-methionine. Lysine 180 (proton acceptor) is an active-site residue.

Belongs to the class I-like SAM-binding methyltransferase superfamily. RNA methyltransferase RlmE family.

The protein localises to the cytoplasm. The enzyme catalyses uridine(2552) in 23S rRNA + S-adenosyl-L-methionine = 2'-O-methyluridine(2552) in 23S rRNA + S-adenosyl-L-homocysteine + H(+). Specifically methylates the uridine in position 2552 of 23S rRNA at the 2'-O position of the ribose in the fully assembled 50S ribosomal subunit. The sequence is that of Ribosomal RNA large subunit methyltransferase E from Granulibacter bethesdensis (strain ATCC BAA-1260 / CGDNIH1).